The sequence spans 357 residues: MSRPIQALIDPAALERNLAIVRRHAPRSRVMAVIKADAYGHGLLCAAEALAEAEGFALLELDAAVRLREAGYRQTILLLEGFFDIDELSWIEQYRLSTVVHHPEQLAMLEAVRRRATLDVFLKLNSGMNRLGFTPTEFPAALEHLKANPAVRQITLMTHFACADEPDRNDSIAAQLQCFNLAAGGRYMPRSLANSAAILRFPEAHADWVRPGIMLYGSSPLAHTTAEQLGLQPAMTVSSRIISVQTLRPNDGVGYGHAFRAGSSMRVGIVAGGYADGYPRHAPTGTPVLVKGRRTRIVGRISMDMLHVDLSEIEDAGVGSPVTLWGRGMPVDEVARAAGTLGYELLCAIAPRMQRVT.

K35 functions as the Proton acceptor; specific for D-alanine in the catalytic mechanism. K35 carries the N6-(pyridoxal phosphate)lysine modification. Residue R130 coordinates substrate. The active-site Proton acceptor; specific for L-alanine is the Y255. M303 contributes to the substrate binding site.

The protein belongs to the alanine racemase family. Pyridoxal 5'-phosphate serves as cofactor.

The catalysed reaction is L-alanine = D-alanine. Its pathway is amino-acid biosynthesis; D-alanine biosynthesis; D-alanine from L-alanine: step 1/1. Catalyzes the interconversion of L-alanine and D-alanine. May also act on other amino acids. The sequence is that of Alanine racemase (alr) from Nitrosospira multiformis (strain ATCC 25196 / NCIMB 11849 / C 71).